The chain runs to 73 residues: MKAEIHPDYHNITVVMTDGTEYVTRSTWGKEGDKMNLDIDPKSHPAWTGGTQQMLDRGGRVSRFQKKFSGFLK.

Residues 34–43 (KMNLDIDPKS) are compositionally biased toward basic and acidic residues. Positions 34 to 54 (KMNLDIDPKSHPAWTGGTQQM) are disordered.

It belongs to the bacterial ribosomal protein bL31 family. Type A subfamily. As to quaternary structure, part of the 50S ribosomal subunit.

In terms of biological role, binds the 23S rRNA. The polypeptide is Large ribosomal subunit protein bL31 (Rhodopseudomonas palustris (strain BisA53)).